We begin with the raw amino-acid sequence, 620 residues long: MAAAATPGAKRPADPARDPDSPPKRPRPNSLDLATVFGPRPAPPRPTSPGAPGSHWPQSPPRGQPDGGAPGEKARPASPALSEASSGPPTPDIPLSPGGAHAIDPDCSPGPPDPDPMWSASAIPNALPPHILAETFERHLRGLLRGVRSPLAIGPLWARLDYLCSLVVSLEAAGMVDRGLGRHLWRLTRRAPPSAAEAVAPRPLMGFYEAATQNQADCQLWALLRRGLTTASTLRWGAQGPCFSSQWLTHNASLRLDAQSSAVMFGRVNEPTARNLLFRYCVGRADAGVNDDADAGRFVFHQPGDLAEENVHACGVLMDGHTGMVGASLDILVCPRDPHGYLAPAPQTPLAFYEVKCRAKYAFDPADPGAPAASAYEDLMARRSPEAFRAFIRSIPNPGVRYFAPGRVPGPEEALVTQDRDWLDSRAAGEKRRCSAPDRALVELNSGVVSEVLLFGVPDLERRTISPVAWSSGELVRREPIFANPRHPNFKQILVQGYVLDSHFPDCPLQPHLVTFLGRHRAGAEEGVTFRLEDGRGAPAGRGGAPGPAKASILPDQAVPIALIITPVRVEPGIYRDIRRNSRLAFDDTLAKLWASRSPGRGPAAADTTSSPPTAGRSSR.

Residues 1–10 (MAAAATPGAK) show a composition bias toward low complexity. Disordered stretches follow at residues 1 to 122 (MAAA…SASA) and 595 to 620 (ASRSPGRGPAAADTTSSPPTAGRSSR). Residues 11-23 (RPADPARDPDSPP) show a composition bias toward basic and acidic residues. Residues 40–49 (RPAPPRPTSP) are compositionally biased toward pro residues. Positions 603–620 (PAAADTTSSPPTAGRSSR) are enriched in low complexity.

Belongs to the herpesviridae alkaline nuclease family. In terms of assembly, interacts with major DNA-binding protein; this interaction increases the nuclease processivity of the alkaline exonuclease.

It localises to the host nucleus. The protein localises to the host cytoplasm. Plays a role in processing non linear or branched viral DNA intermediates in order to promote the production of mature packaged unit-length linear progeny viral DNA molecules. Exhibits endonuclease and exonuclease activities and accepts both double-stranded and single-stranded DNA as substrate. Exonuclease digestion of DNA is in the 5'-&gt; 3' direction and the products are 5'-monophosphate nucleosides. Additionally, forms a recombinase with the major DNA-binding protein, which displays strand exchange activity. In Homo sapiens (Human), this protein is Alkaline nuclease.